Here is a 125-residue protein sequence, read N- to C-terminus: Cu-Zn superoxide dismutase-like protein OPG175 (125 aa).

A disulfide bridge links Cys-52 with Cys-102.

This sequence belongs to the Cu-Zn superoxide dismutase family.

Its subcellular location is the virion. The protein resides in the host cytoplasm. Its function is as follows. Superoxide dismutase-like protein with no enzymatic activity. The polypeptide is Cu-Zn superoxide dismutase-like protein OPG175 (OPG175) (Cowpox virus (strain Brighton Red) (CPV)).